Here is a 461-residue protein sequence, read N- to C-terminus: ATP-dependent protease ATPase subunit HslU (461 aa).

ATP is bound by residues I18, 60-65 (GVGKTE), D274, E339, and R411.

This sequence belongs to the ClpX chaperone family. HslU subfamily. In terms of assembly, a double ring-shaped homohexamer of HslV is capped on each side by a ring-shaped HslU homohexamer. The assembly of the HslU/HslV complex is dependent on binding of ATP.

Its subcellular location is the cytoplasm. ATPase subunit of a proteasome-like degradation complex; this subunit has chaperone activity. The binding of ATP and its subsequent hydrolysis by HslU are essential for unfolding of protein substrates subsequently hydrolyzed by HslV. HslU recognizes the N-terminal part of its protein substrates and unfolds these before they are guided to HslV for hydrolysis. This Carboxydothermus hydrogenoformans (strain ATCC BAA-161 / DSM 6008 / Z-2901) protein is ATP-dependent protease ATPase subunit HslU.